The chain runs to 360 residues: Alkanal monooxygenase alpha chain (360 aa).

It belongs to the bacterial luciferase oxidoreductase family. Heterodimer of an alpha and a beta chain.

The enzyme catalyses a long-chain fatty aldehyde + FMNH2 + O2 = a long-chain fatty acid + hnu + FMN + H2O + 2 H(+). In terms of biological role, light-emitting reaction in luminous bacteria. The sequence is that of Alkanal monooxygenase alpha chain (luxA) from Photorhabdus luminescens (Xenorhabdus luminescens).